A 684-amino-acid chain; its full sequence is Glycine--tRNA ligase beta subunit (684 aa).

It belongs to the class-II aminoacyl-tRNA synthetase family. As to quaternary structure, tetramer of two alpha and two beta subunits.

The protein localises to the cytoplasm. It catalyses the reaction tRNA(Gly) + glycine + ATP = glycyl-tRNA(Gly) + AMP + diphosphate. The chain is Glycine--tRNA ligase beta subunit from Pseudomonas entomophila (strain L48).